The primary structure comprises 227 residues: PKHD-type hydroxylase CC_0027 (227 aa).

In terms of domain architecture, Fe2OG dioxygenase spans 78 to 178 (TILSPMFNRY…RTASFFWIQS (101 aa)). Fe cation is bound by residues histidine 96, aspartate 98, and histidine 159. Arginine 169 contributes to the 2-oxoglutarate binding site.

Fe(2+) serves as cofactor. The cofactor is L-ascorbate.

This is PKHD-type hydroxylase CC_0027 from Caulobacter vibrioides (strain ATCC 19089 / CIP 103742 / CB 15) (Caulobacter crescentus).